Consider the following 711-residue polypeptide: Ribosomal RNA large subunit methyltransferase K/L (711 aa).

A THUMP domain is found at 43–154; that stretch reads LAYRITLWSR…RGQITLGINF (112 aa).

This sequence belongs to the methyltransferase superfamily. RlmKL family.

Its subcellular location is the cytoplasm. It catalyses the reaction guanosine(2445) in 23S rRNA + S-adenosyl-L-methionine = N(2)-methylguanosine(2445) in 23S rRNA + S-adenosyl-L-homocysteine + H(+). The enzyme catalyses guanosine(2069) in 23S rRNA + S-adenosyl-L-methionine = N(2)-methylguanosine(2069) in 23S rRNA + S-adenosyl-L-homocysteine + H(+). In terms of biological role, specifically methylates the guanine in position 2445 (m2G2445) and the guanine in position 2069 (m7G2069) of 23S rRNA. The chain is Ribosomal RNA large subunit methyltransferase K/L from Shewanella loihica (strain ATCC BAA-1088 / PV-4).